We begin with the raw amino-acid sequence, 4625 residues long: Dynein-1-alpha heavy chain, flagellar inner arm I1 complex (4625 aa).

Residues 1–1919 (MDRRLEWVKE…LIRQCTGLFK (1919 aa)) are stem. A compositionally biased stretch (acidic residues) spans 70-84 (EQAPEAEDGEGEEHD). A disordered region spans residues 70-163 (EQAPEAEDGE…DEPPAPPAPK (94 aa)). Low complexity predominate over residues 111–140 (EDAPAAAAEANGANPEDEAAAPADGAADGA). Residues 144-155 (GGEEGDGAEGDE) are compositionally biased toward acidic residues. 960–967 (AGTNSGKS) is a binding site for ATP. 2 coiled-coil regions span residues 1227-1259 (EELK…RYRT) and 1339-1409 (TVEL…AVRQ). AAA regions lie at residues 1920 to 2141 (YGYE…VLVM), 2201 to 2437 (DVVE…RRPK), 2550 to 2800 (EPPA…IYEG), and 2906 to 3155 (NFYN…LRRY). ATP contacts are provided by residues 1958–1965 (GPAGTGKT), 2242–2249 (GQTGGGKT), 2588–2595 (GESGTAKS), and 2945–2952 (GVGGSGKQ). Coiled coils occupy residues 3192-3297 (LEKL…IRSY) and 3400-3494 (KRKK…LIGD). The segment at 3192 to 3494 (LEKLIQAAVE…ESRRDRLIGD (303 aa)) is stalk. 2 AAA regions span residues 3542–3773 (LTSD…EIAE) and 3998–4216 (ITRF…LIST). ATP is bound at residue 3680-3687 (GPEISGKT). The stretch at 3701-3788 (EQLLNVTLRH…KVTAAEIEET (88 aa)) forms a coiled coil.

This sequence belongs to the dynein heavy chain family. As to quaternary structure, the I1 inner arm complex (also known as the f dynein complex) is a two-headed isoform composed of two heavy chains (1-alpha and 1-beta), three intermediate chains and three light chains. I1 occupies a specific position proximal to the first radial spoke and repeats every 96 nm along the length of the axoneme.

The protein localises to the cell projection. Its subcellular location is the cilium. It is found in the flagellum. It localises to the cytoplasm. The protein resides in the cytoskeleton. The protein localises to the flagellum axoneme. In terms of biological role, force generating protein of eukaryotic cilia and flagella. Produces force towards the minus ends of microtubules. Dynein has ATPase activity; the force-producing power stroke is thought to occur on release of ADP. Required for assembly of the I1 inner arm complex and its targeting to the appropriate axoneme location. Also required for phototaxis. This chain is Dynein-1-alpha heavy chain, flagellar inner arm I1 complex (DHC1), found in Chlamydomonas reinhardtii (Chlamydomonas smithii).